Reading from the N-terminus, the 56-residue chain is Large ribosomal subunit protein bL32B (56 aa).

Residues 1–19 are compositionally biased toward basic residues; it reads MAVPKRRMSRSNTRHRRAQ. The disordered stretch occupies residues 1-22; it reads MAVPKRRMSRSNTRHRRAQWKA.

This sequence belongs to the bacterial ribosomal protein bL32 family.

In Streptomyces coelicolor (strain ATCC BAA-471 / A3(2) / M145), this protein is Large ribosomal subunit protein bL32B (rpmF2).